Here is a 1500-residue protein sequence, read N- to C-terminus: MEGSDFVDPAFSSGERISASDLNSEHIIQAENHSFANRISMDMDVPDGHQLDSNLTGFRWKRVLNPTGPQPRPRHGHRAINIKELMVVFGGGNEGIVDELHVYNTVTNQWYVPVLKGDVPNGCAAYGFVVEGTRMFVFGGMIEYGKYSNELYELQATKWEWRKMYPESPDSGLSPCPRLGHSFTMVGEKIFLFGGLANESDDPKNNIPKYLNDLYILDTRGVHSHNGKWIVPKTYGDSPPPRESHTGISFATKSNGNLNLLIYGGMSGCRLGDLWLLETDSMTWSKPKTSGEAPLPRSLHSSTMIGNKMYVFGGWVPLVINDSKSTTEREWKCTNTLAVLDLETMTWENVTLDTVEENVPRARAGHCAVGIQSRLYVWSGRDGYRKAWNNQVCCKDLWYLEVSKPLYAVKVALVRASTHALELSWTATTFAAAYVLQIQKIEQPLNTSSKLLSNNIVQQGTPTSAETSGINISANRSGSALGLGVEATSTVLKLEKESLQLSGCQPETNVQPSVNDLLQSMSQPSSPASRADKDPLSSGGGTTFNLSTSVASVHPQISVISSTAAVTGNDTASPSGAINSILQKFRPVVTAVRTSTTTAVSIATSTSDPLSVRVPSTMSANVVLSSSSSTLRIVPSVTASHSLRIASSQASGNNCRSSSAINILKTALPNVAVQSQPTSSTTTSIGGKQYFIQKPLTLAPNVQLQFVKTSGGMTVQTLPKVNFTASKGTPPHGISIANPHLASGITQIQGSTVPGSQIQKPIVSGNVLKLVSPHTMAGGKLIMKNSNILQMGKVTPNVMGGKPAFVITNKQGTPLGNQQIIIVTTGGNVRSVPTSTVMTSAGGSASGTNIVSIVNSTSTTPSPLQALSGQKTLISNQSGVKMLRNISSVQASSSMAFGQKQSGTPIHQKTALYIGGKAVTVMSTNTSMAASGNKVMVLPGTSSNNSPATTTALSARKSFVFNAGGSPRTVTLATKSINAKSIPQSQPVTETNNHSVATIKDTDPMDDIIEQLDGAGDLLKLSESEGQHGSEENENNGENATSSSASALFTGGDTAGPSRAQNPIVMEHPVDIIEDVSGVSSTTDVNETAIVSGDTIESLKMSEKENDDVKSMGEKSILSDDCHQPTTSETEAATILTTIKSAEALVLETAEIRKDHTGCTIGSLKENQDENKKFKQRQESSPSQNIHQFQNVDGSQLEALASAALLQAATSDTTALALKELIERPESETNTRSSNIAEIQQNNVQSTLAVVVPNTSQNENQKWHTVGVFKDLSHTVTSYIDSNCISDSFFDGIDVDNLPDFSKFPRTNLEPGTAYRFRLSAINSCGRGEWGEISSFKTCLPGFPGAPSAIKISKDVKEGAHLTWEPPPAQKTKEIIEYSVYLAVKPTAKDKALSTPQLAFVRVYVGAANQCTVPNASLSNAHVDCSNKPAIIFRIAARNQKGYGPATQVRWLQDPAAAKQHTPTVTPNLKRGPEKSTIGSSNIANTFCSPHKRGRNGLHD.

5 Kelch repeats span residues leucine 85–threonine 133, methionine 135–histidine 181, lysine 189–aspartate 237, asparagine 259–asparagine 307, and lysine 308–serine 373. Serine 477 is subject to Phosphoserine. Polar residues predominate over residues leucine 517–alanine 528. Residues leucine 517 to threonine 543 are disordered. Serine 958 and serine 966 each carry phosphoserine. Positions serine 1024–glutamine 1061 are disordered. Positions asparagine 1036 to alanine 1047 are enriched in low complexity. The residue at position 1126 (threonine 1126) is a Phosphothreonine. A disordered region spans residues isoleucine 1161 to asparagine 1185. The segment covering glutamate 1166–glutamine 1178 has biased composition (basic and acidic residues). 2 consecutive Fibronectin type-III domains span residues valine 1244–proline 1341 and alanine 1346–alanine 1457. Residues alanine 1458–aspartate 1500 are disordered. The Bipartite nuclear localization signal signature appears at lysine 1470–arginine 1495. The segment covering threonine 1477 to cysteine 1488 has biased composition (polar residues). Position 1489 is a phosphoserine (serine 1489). Residues proline 1490 to aspartate 1500 show a composition bias toward basic residues.

Core component of several methyltransferase-containing complexes. Component of the SET1 complex, composed at least of the catalytic subunit Set1, wds/WDR5, Wdr82, Rbbp5, ash2, Cfp1/CXXC1, hcf and Dpy-30L1. Component of the MLL3/4 complex composed at least of the catalytic subunit trr, ash2, Rbbp5, Dpy-30L1, wds, hcf, ptip, Pa1, Utx, Lpt and Ncoa6. Component of the Ada2a-containing (ATAC) complex composed of at least Ada2a, Atac1, Hcf, Ada3, Gcn5, Mocs2B, Charac-14, Atac3, Atac2, NC2beta and wds. Proteolytic cleavage occurs between amino acids 900 and 1100 within the non-conserved central region, giving rise to two independent but tightly associated N- and C-terminal subunits.

The protein resides in the nucleus. Functionally, may be involved in control of the cell cycle. The chain is Host cell factor from Drosophila melanogaster (Fruit fly).